Consider the following 686-residue polypeptide: Probable metal-nicotianamine transporter YSL4 (686 aa).

Helical transmembrane passes span 27-47 (WLVTPRAMAVAVLLGIVFCFV), 53-73 (MMTGFVPALNMPVTVLSFFLL), 96-116 (MFLITCVITCLNLAITGGFAT), 151-171 (FFLIGMAGVLSNIPLNQIMII), 203-223 (VMTIFKVFFGSFSWSIFQWFY), 264-284 (IVNFGLLFGAIISWGFLYPYL), 308-328 (VFISVTLIVTDGLINFLILVT), 373-393 (IPMFVPVAAYVAWTAISMVAM), 405-425 (VGVLYLAIPVVGFCNTYATGL), 441-461 (IFAAWIARPGAIVASLLVSGI), 488-508 (AMIAGQVFGVALSSVVSPCIF), 554-574 (CVELCVIAVLVTIAIDALVLV), 596-616 (FFAGSYFTLDMCLGGLLLLLW), and 629-649 (AAVAAGLICGEGLFTLPSALL).

It belongs to the YSL (TC 2.A.67.2) family.

It is found in the membrane. Its function is as follows. May be involved in the transport of nicotianamine-chelated metals. The chain is Probable metal-nicotianamine transporter YSL4 (YSL4) from Oryza sativa subsp. japonica (Rice).